The primary structure comprises 446 residues: Telomere-binding protein 51 kDa subunit (446 aa).

Belongs to the telombin family. As to quaternary structure, monomer.

It is found in the nucleus. Its subcellular location is the chromosome. The protein localises to the telomere. May function as protective capping of the single-stranded telomeric overhang. May also participate in telomere length regulation during DNA replication. Binds specifically to the T4G4-containing extension on the 3'strand and protects this region of the telomere from nuclease digestion and chemical modification. The protein is Telomere-binding protein 51 kDa subunit of Euplotes crassus.